Here is a 121-residue protein sequence, read N- to C-terminus: Ribosome-binding factor A (121 aa).

Belongs to the RbfA family. Monomer. Binds 30S ribosomal subunits, but not 50S ribosomal subunits or 70S ribosomes.

Its subcellular location is the cytoplasm. Functionally, one of several proteins that assist in the late maturation steps of the functional core of the 30S ribosomal subunit. Associates with free 30S ribosomal subunits (but not with 30S subunits that are part of 70S ribosomes or polysomes). Required for efficient processing of 16S rRNA. May interact with the 5'-terminal helix region of 16S rRNA. The sequence is that of Ribosome-binding factor A from Clostridium novyi (strain NT).